Consider the following 448-residue polypeptide: U1 small nuclear ribonucleoprotein 70 kDa (448 aa).

Residues 91–201 (TEIKNATEDP…GGGLGGTRRG (111 aa)) form a required for interaction with U1 RNA region. One can recognise an RRM domain in the interval 102–180 (RTLFIARINY…KRVLVDVERA (79 aa)). A disordered region spans residues 188–448 (PRRLGGGLGG…SSGDPSWWRQ (261 aa)). Gly residues predominate over residues 191–200 (LGGGLGGTRR). 2 stretches are compositionally biased toward basic and acidic residues: residues 206-234 (NIKH…REGP) and 262-272 (ERRDRERDRGR). Residues 281–293 (SRSRSRERRKRRA) are compositionally biased toward basic residues. Basic and acidic residues-rich tracts occupy residues 294-320 (GSRE…DRER) and 346-376 (RDRE…IKEE). Residues 405 to 425 (RPPPAHHNMFSVPPPPILGRG) form a mediates binding to Psi region. The span at 426-448 (NASTNPNPDNGQQSSGDPSWWRQ) shows a compositional bias: polar residues.

As to quaternary structure, component of the U1 snRNP. Interacts with Psi; essential for alternative splicing of P-element transposase. Interacts with the SMN complex.

It localises to the nucleus speckle. Its subcellular location is the nucleus. It is found in the nucleoplasm. In terms of biological role, mediates the splicing of pre-mRNA by binding to the stem loop I region of U1-snRNA. Required during oogenesis for nurse cell chromatin dispersal. This is U1 small nuclear ribonucleoprotein 70 kDa (snRNP-U1-70K) from Drosophila melanogaster (Fruit fly).